Here is a 547-residue protein sequence, read N- to C-terminus: Fumarate reductase (CoM/CoB) subunit A (547 aa).

Belongs to the FAD-dependent oxidoreductase 2 family. In terms of assembly, subunit A of the heterodimeric fumarate reductase of methanogenic Archaea, composed of subunits A (TfrA) and B (TfrB). An oxidized flavin serves as cofactor.

It localises to the cytoplasm. The catalysed reaction is coenzyme B + coenzyme M + fumarate = coenzyme M-coenzyme B heterodisulfide + succinate. Its function is as follows. Catalyzes the reduction of fumarate with reduced coenzyme M (CoM-S-H) and coenzyme B (CoB-S-H). In vitro, is able to reduces fumarate with reduced benzyl viologen, oxidize CoM-S-H and CoB-S-H to CoM-S-S-CoB with methylene blue, and reduce CoM-S-S-CoB with reduced benzyl viologen. The enzyme has specificity for the two thiol compounds as the CoB--CoM heterodisulfide reductase. The enzyme is very sensitive to oxygen. This is Fumarate reductase (CoM/CoB) subunit A from Methanothermobacter marburgensis (strain ATCC BAA-927 / DSM 2133 / JCM 14651 / NBRC 100331 / OCM 82 / Marburg) (Methanobacterium thermoautotrophicum).